Consider the following 317-residue polypeptide: Acetyl-coenzyme A carboxylase carboxyl transferase subunit alpha (317 aa).

A CoA carboxyltransferase C-terminal domain is found at 40–293; that stretch reads LEGRVRDAMV…ETVIGDALKE (254 aa).

It belongs to the AccA family. As to quaternary structure, acetyl-CoA carboxylase is a heterohexamer composed of biotin carboxyl carrier protein (AccB), biotin carboxylase (AccC) and two subunits each of ACCase subunit alpha (AccA) and ACCase subunit beta (AccD).

Its subcellular location is the cytoplasm. It carries out the reaction N(6)-carboxybiotinyl-L-lysyl-[protein] + acetyl-CoA = N(6)-biotinyl-L-lysyl-[protein] + malonyl-CoA. It participates in lipid metabolism; malonyl-CoA biosynthesis; malonyl-CoA from acetyl-CoA: step 1/1. Functionally, component of the acetyl coenzyme A carboxylase (ACC) complex. First, biotin carboxylase catalyzes the carboxylation of biotin on its carrier protein (BCCP) and then the CO(2) group is transferred by the carboxyltransferase to acetyl-CoA to form malonyl-CoA. The polypeptide is Acetyl-coenzyme A carboxylase carboxyl transferase subunit alpha (Rhizobium meliloti (strain 1021) (Ensifer meliloti)).